Here is a 718-residue protein sequence, read N- to C-terminus: Methionine--tRNA ligase (718 aa).

The short motif at 27 to 37 (PYANGQIHIGH) is the 'HIGH' region element. Residues C158, C161, C171, and C174 each coordinate Zn(2+). A 'KMSKS' region motif is present at residues 348–352 (KMSKS). Residue K351 participates in ATP binding. The tRNA-binding domain maps to 612 to 718 (DFAKIDLRIA…SGAKPGMRVK (107 aa)).

The protein belongs to the class-I aminoacyl-tRNA synthetase family. MetG type 1 subfamily. In terms of assembly, homodimer. Zn(2+) is required as a cofactor.

The protein resides in the cytoplasm. It catalyses the reaction tRNA(Met) + L-methionine + ATP = L-methionyl-tRNA(Met) + AMP + diphosphate. In terms of biological role, is required not only for elongation of protein synthesis but also for the initiation of all mRNA translation through initiator tRNA(fMet) aminoacylation. The chain is Methionine--tRNA ligase from Burkholderia cenocepacia (strain ATCC BAA-245 / DSM 16553 / LMG 16656 / NCTC 13227 / J2315 / CF5610) (Burkholderia cepacia (strain J2315)).